Reading from the N-terminus, the 789-residue chain is Toll-like receptor 6 (789 aa).

An N-terminal signal peptide occupies residues M1–A31. Topologically, residues D32–T587 are extracellular. LRR repeat units follow at residues T54–G77, L78–D101, L102–N122, L123–Q147, L148–H168, L169–T196, K197–T219, L220–S250, L251–P277, V278–A303, L304–E330, M331–T354, F355–E378, L379–S404, L405–S428, I429–P449, R450–T473, L474–S495, and L496–N519. A disulfide bond links C117 and C139. N-linked (GlcNAc...) asparagine glycosylation is present at N144. Residues N186 and N214 are each glycosylated (N-linked (GlcNAc...) asparagine). The cysteines at positions 235 and 265 are disulfide-linked. N-linked (GlcNAc...) asparagine glycans are attached at residues N253 and N285. Cysteines 348 and 373 form a disulfide. A glycan (N-linked (GlcNAc...) asparagine) is linked at N372. C423 and C446 are oxidised to a cystine. Residue N433 is glycosylated (N-linked (GlcNAc...) asparagine). The N-linked (GlcNAc...) asparagine glycan is linked to N519. The LRRCT domain occupies I520–H575. A helical membrane pass occupies residues V588–L608. The Cytoplasmic portion of the chain corresponds to D609–K789. The TIR domain occupies L639–I780.

It belongs to the Toll-like receptor family. In terms of assembly, homodimer (via cytoplasmic TIR domain). Heterodimer with TLR2 via their respective extracellular domains. Binds MYD88 via their respective TIR domains. Interacts with CD36, following CD36 stimulation by oxLDL or amyloid-beta 42, and forms a heterodimer with TLR4. The trimeric complex is internalized and triggers inflammatory response. LYN kinase activity facilitates TLR4:TLR6 heterodimerization and signal initiation. The heterodimer TLR2:TLR6 interacts with CD14 and CD36 in response to triacylated lipopeptides.

The protein localises to the cell membrane. The protein resides in the cytoplasmic vesicle. It localises to the phagosome membrane. Its subcellular location is the membrane raft. It is found in the golgi apparatus. In terms of biological role, participates in the innate immune response to Gram-positive bacteria and fungi. Specifically recognizes diacylated and, to a lesser extent, triacylated lipopeptides. In response to diacylated lipopeptides, forms the activation cluster TLR2:TLR6:CD14:CD36, this cluster triggers signaling from the cell surface and subsequently is targeted to the Golgi in a lipid-raft dependent pathway. Acts via MYD88 and TRAF6, leading to NF-kappa-B activation, cytokine secretion and the inflammatory response. Recognizes mycoplasmal macrophage-activating lipopeptide-2kD (MALP-2), soluble tuberculosis factor (STF), phenol-soluble modulin (PSM) and B.burgdorferi outer surface protein A lipoprotein (OspA-L) cooperatively with TLR2. In complex with TLR4, promotes sterile inflammation in monocytes/macrophages in response to oxidized low-density lipoprotein (oxLDL) or amyloid-beta 42. In this context, the initial signal is provided by oxLDL- or amyloid-beta 42-binding to CD36. This event induces the formation of a heterodimer of TLR4 and TLR6, which is rapidly internalized and triggers inflammatory response, leading to the NF-kappa-B-dependent production of CXCL1, CXCL2 and CCL9 cytokines, via MYD88 signaling pathway, and CCL5 cytokine, via TICAM1 signaling pathway, as well as IL1B secretion. In Dasypus novemcinctus (Nine-banded armadillo), this protein is Toll-like receptor 6 (TLR6).